The sequence spans 236 residues: Ribosome maturation protein SDO1 homolog (236 aa).

This sequence belongs to the SDO1/SBDS family.

The protein is Ribosome maturation protein SDO1 homolog of Pyrococcus horikoshii (strain ATCC 700860 / DSM 12428 / JCM 9974 / NBRC 100139 / OT-3).